Reading from the N-terminus, the 94-residue chain is Integration host factor subunit beta (94 aa).

Belongs to the bacterial histone-like protein family. In terms of assembly, heterodimer of an alpha and a beta chain.

Functionally, this protein is one of the two subunits of integration host factor, a specific DNA-binding protein that functions in genetic recombination as well as in transcriptional and translational control. In Nitrosospira multiformis (strain ATCC 25196 / NCIMB 11849 / C 71), this protein is Integration host factor subunit beta.